Here is a 171-residue protein sequence, read N- to C-terminus: Methyl-coenzyme M reductase operon protein D (171 aa).

In terms of assembly, MCR is composed of three subunits: alpha, beta, and gamma. The function of proteins C and D is not known.

The protein is Methyl-coenzyme M reductase operon protein D (mcrD) of Methanosarcina barkeri (strain Fusaro / DSM 804).